The primary structure comprises 719 residues: DNA polymerase epsilon subunit B (719 aa).

The segment at 107-147 (SIPPKTKTYNNGGGKTTTIDRFLTKRPSPSDNDEGPLDQSI) is disordered.

The protein belongs to the DNA polymerase epsilon subunit B family. In terms of assembly, heterotetramer. Consists of four subunits: POL2, DPB2, DPB3 and DPB4.

It is found in the nucleus. In terms of biological role, as accessory component of the DNA polymerase epsilon (DNA polymerase II) participates in chromosomal DNA replication. In Candida glabrata (strain ATCC 2001 / BCRC 20586 / JCM 3761 / NBRC 0622 / NRRL Y-65 / CBS 138) (Yeast), this protein is DNA polymerase epsilon subunit B (DPB2).